Reading from the N-terminus, the 203-residue chain is Urease accessory protein UreG (203 aa).

Residue 14 to 21 (GPVGSGKT) coordinates GTP.

This sequence belongs to the SIMIBI class G3E GTPase family. UreG subfamily. As to quaternary structure, homodimer. UreD, UreF and UreG form a complex that acts as a GTP-hydrolysis-dependent molecular chaperone, activating the urease apoprotein by helping to assemble the nickel containing metallocenter of UreC. The UreE protein probably delivers the nickel.

It is found in the cytoplasm. In terms of biological role, facilitates the functional incorporation of the urease nickel metallocenter. This process requires GTP hydrolysis, probably effectuated by UreG. The chain is Urease accessory protein UreG from Rhizobium leguminosarum bv. trifolii (strain WSM2304).